A 345-amino-acid polypeptide reads, in one-letter code: Very-long-chain 3-oxoacyl-CoA reductase (345 aa).

A helical membrane pass occupies residues 26–46; sequence GAAVLLTTGTLFIASRVLTFV. Residues Val-71, Asp-125, Asp-133, Asn-152, Tyr-219, Lys-223, Ile-252, and Ser-254 each coordinate NADP(+). The Proton donor role is filled by Tyr-219. The active-site Lowers pKa of active site Tyr is Lys-223.

Belongs to the short-chain dehydrogenases/reductases (SDR) family.

The protein resides in the endoplasmic reticulum membrane. It carries out the reaction a very-long-chain (3R)-3-hydroxyacyl-CoA + NADP(+) = a very-long-chain 3-oxoacyl-CoA + NADPH + H(+). It functions in the pathway lipid metabolism; fatty acid biosynthesis. Functionally, component of the microsomal membrane bound fatty acid elongation system, which produces the 26-carbon very long-chain fatty acids (VLCFA) from palmitate. Catalyzes the reduction of the 3-ketoacyl-CoA intermediate that is formed in each cycle of fatty acid elongation. VLCFAs serve as precursors for ceramide and sphingolipids. In Aspergillus fumigatus (strain CBS 144.89 / FGSC A1163 / CEA10) (Neosartorya fumigata), this protein is Very-long-chain 3-oxoacyl-CoA reductase.